The sequence spans 360 residues: Peptide chain release factor 1 (360 aa).

At Gln235 the chain carries N5-methylglutamine. The tract at residues 285–305 is disordered; sequence KRQEAEASERRNLLGSGDRSD.

The protein belongs to the prokaryotic/mitochondrial release factor family. Methylated by PrmC. Methylation increases the termination efficiency of RF1.

It is found in the cytoplasm. Peptide chain release factor 1 directs the termination of translation in response to the peptide chain termination codons UAG and UAA. The chain is Peptide chain release factor 1 from Proteus mirabilis (strain HI4320).